A 3141-amino-acid chain; its full sequence is MSTIVFGSFTCHLDAAIHQDNADRLAKAWTRPENRQVSNVHLLCRRAAKSLINTYESATASAWKGLEEKLQPMFAKREFSKTVTKRKGLRCFKESSEKFIEKKLRKQYQEERERFQFVNGPDAIVNQISVDKCEASVWVPFPHIIEKPSFATPSMKKKVVFTKVRMSEASLQLFMRRVAANAKANGQKVEIIGRKRVVGNYTTKSRLTYFRTHVRHLDGSKPRYDLVLDEATKKILQLFANTSRFHHVHKKGEVTPGMSGFVVNPINLSDPMQVYDTDLFIVRGKHNSILVDSRCKVSKKQSNEIIHYSDPGKQFSDGFTNSFMQCKLRETDHQSTSDLDVKECGDVAALVCQAIIPCGKITCLQCAQKYSYMSQQEIRDRFSTVIEQHEKTAMDNYPQFSHVLAFLKRYRELMRVENQNYEAFKDITHMIGEDRKEAPFSHLQQINELIIKGGMMSAQDYIEASDHLRELARYQKNRTENIRSGSIKAFRNKISSKAHVNMQLMCDNQLDTNGNFVWGQREYHAKRFFRNYFDVIDVSEGYRRHIVRENPRGIRKLAIGNLVISTNLAALRKQLLGEECIHFEVSKECTSRRGENFVYQCCCVTHEDGTPLESEIISPTKNHLVVGNTGDSKYVDLPTAKGGAMFIAKAGYCYINIFLAMLININEDEAKSFTKTVRDTLVPKLGTWPSMMDLATACHFLAVLYPETRNAELPRILVDHEAKIFHVVDSFGSLSTGMHVLKANTINQLISFASDTLDSNMKTYLVGGSEVDKCDEFKNVKLLIRSIYKPQIMEQVLKEEPYLLLMSVLSPGVLMALFNSGSLEKATQYWITRSHTLAAITSMLSALAAKVSLASTLNAQMSVIDEHAAVLCDSVFDGTKPYASYMMAVKTLERMKARTESDHTLNDLGFSVLRQATPHLVEKSYLQELEQAWKELSWSEKFSAILESQRWRKHIPKPFIPKDGADLGGRYDISVRSLLGNQYKRLRDVVRRKRDDVVCYTHQSMGKLFCKAIGISTSFLPSTLKMLDMLIVFGLLLSIGATCNSMINEHKHLKQLAADREDKKRFKRLQVLHTRLSEKVGCTPTADEFLEYVGGENPDLLKHAEDLIGDGQVVVHQSKRDSQANLERVVAFVALVMMLFDSERSDGVYKILNKLKGIMGSVDQAVHHQSLDDIEDILDEKKLTVDFVLQSNEVAPTVPFDSTFEKWWTNQLETGNVIPHYRTEGHFLEFTRENAAHIANEVMHGSHQDILIRGAVGSGKSTGLPFHLSKKGHVLLIEPTRPLAENVCKQLRGQPFNVNPTLRMRGMSTFGSTPITVMTSGYALHFLANNPTYLDNYKCIIFDECHVHDASAMAFRCLLSEYSYPGKILKVSATPPGHEVDFKTQKEVKVIVEESLSFQQFVSNLGTGCNSDILKHGVNVLVYVASYNEVDTLSKLLTDRSFKVSKVDGRTMKIGNVEIPTSGTQAKPHFVVATNIIENGVTLDIDVVVDFGLKVVPVLDIDNRLVRYTKKSISYGERIQRLGRVGRNKPGAALRIGFTEKGLTQIPPIIATEAAFLCFTYGLPVMTNGVSTSLLAMCTVKQARTMQQFELSPFYTVALVRFDGTMHQEIFRLLKSYRLRDSEVILNKLAIPNSNVCGWMSVRDYKRQGCNLDLDENIRVPFYVKDIPETLHERIWQVVETHKSDAGFGRICSSSACKIAYTLQTDIHSIPRTIKIIDALLEQERTKQAHFRAMTSQSCSSSNFSLSSITSAIRSKYAKDHTEENIGVLQMAKSQLLEFKNLNIDPSYPELVRNFGALECVHHQTKEGVSKALQLKGHWNKRLITRDATLMLGVLGGGAWMIFSYLRDSFKEGVVHQGFNRRQRQKLKFRQARDNRMAREVYGDDSTMEDYFGSAYSKKGKSKGKTRGMGTKTRKFVNMYGYDPTDYNFVRFVDPLTGHTLDEDPLMDINLVQEHFSQIRNDYIGDDKITMQHIMSNPGIVAYYIKDATQKALKVDLTPHNPLRVCDKTATIAGFPEREFELRQTGHPIFVEPNAIPKINEEGDEEVDHESKSLFRGLRDYNPIASSICQLNNSSGARQSEMFGLGFGGLIVTNQHLFKRNDGELTIRSHHGEFVVKDTKTLKLLPCKGRDIVIIRLPKDFPPFPKRLQFRTPTTEDRVCLIGSNFQTKSISSTMSETSATYPVDNSHFWKHWISTKDGHCGLPIVSTRDGSILGLHSLANSTNTQNFYAAFPDNFETTYLSNQDNDNWIKQWRYNPDEVCWGSLQLKRDIPQSPFTICKLLTDLDGEFVYTQSKTTHWLRDRLEGNLKAVGACPGQLVTKHVVKGKCTLFETYLLTHPEEHEFFRPLMGAYQKSALNKDAYVKDLMKYSKPIVVGAVDCDQFERAVDVVISMLISKGFEECNYVTDPDDIFSALNMKAAVGALYSGKKRDYFKNVSDQDKESFVRASCKRLFMGKKGVWNGSLKAELRPKEKVEANKTRSFTAAPIDTLLGGKVCVDDFNNQFYSLNLHCPWSVGMTKFRGGWDKLLRALPEGWIYCDADGSQFDSSLSPYLINAVLNIRLAFMEEWDIGEQMLSNLYTEIVYTPIATPDGTIVKKFKGNNSGQPSTVVDNTLMVILAMTYSLLKLGYHPDTHDCICRYFVNGDDLVLAVHPAYESIYDELQEHFSQLGLNYTFATKTENKEELWFMSHKGVLYDDMYIPKLEPERIVSILEWDRSNEPIHRLEAICASMVEAWGYKELLREIRKFYSWVLEQAPYNALSKDGKAPYIAETALKKLYTDTEASETEIERYLEAFYDDINDDGESNVVVHQADEREDEEEVDAGKPIVVTAPAATSPILQPPPVIQPAPRTTAPMLNPIFTPATTQPATKPVSQVPGPQLQTFGTYGNEDASPSNSNALVNTNRDRDVDAGSIGTFTVPRLKAMTSKLSLPKVKGKAIMNLNHLAHYSPAQVDLSNTRAPQSCFQTWYEGVKRDYDVTDDEMSIILNGLMVWCIENGTSPNINGMWVMMDGETQVEYPIKPLLDHAKPTFRQIMAHFSNVAEAYIEKRNYEKAYMPRYGIQRNLTDYSLARYAFDFYEMTSTTPVRAREAHIQMKAAALRNVQNRLFGLDGNVGTQEEDTERHTAGDVNRNMHNLLGVRGV.

The Peptidase S30 domain maps to Arg165–Tyr308. Residues His216, Asp225, and Ser259 each act as for P1 proteinase activity in the active site. Residues Lys360–Cys363 carry the Involved in interaction with stylet and aphid transmission motif. Residues Pro619–Lys621 carry the Involved in virions binding and aphid transmission motif. The Peptidase C6 domain maps to Met645–Gly767. Residues Cys653 and His726 each act as for helper component proteinase activity in the active site. A Helicase ATP-binding domain is found at Glu1241 to Glu1393. Gly1254–Ser1261 contributes to the ATP binding site. Residues Asp1343–His1346 carry the DECH box motif. Residues Asp1412–Ser1571 form the Helicase C-terminal domain. The Nuclear localization signal signature appears at Lys1898–Lys1905. Tyr1920 carries the post-translational modification O-(5'-phospho-RNA)-tyrosine. Residues Ser2051–Arg2269 form the Peptidase C4 domain. Residues His2096, Asp2131, and Cys2201 each act as for nuclear inclusion protein A activity in the active site. The region spanning Trp2535–Tyr2659 is the RdRp catalytic domain. Phosphoserine is present on residues Ser2836, Ser2892, Ser2912, and Ser2929. A phosphothreonine mark is found at Thr3065 and Thr3124.

This sequence belongs to the potyviridae genome polyprotein family. In terms of assembly, interacts with host eIF4E protein (via cap-binding region); this interaction mediates the translation of the VPg-viral RNA conjugates. Part of a complex that comprises VPg, RNA, host EIF4E and EIF4G; this interaction mediates the translation of the VPg-viral RNA conjugates. Interacts with host eIF(iso)4E both in host nucleus and cytoplasm. Post-translationally, VPg is uridylylated by the polymerase and is covalently attached to the 5'-end of the genomic RNA. This uridylylated form acts as a nucleotide-peptide primer for the polymerase. Potyviral RNA is expressed as two polyproteins which undergo post-translational proteolytic processing. Genome polyprotein is processed by NIa-pro, P1 and HC-pro proteinases resulting in the production of at least ten individual proteins. P3N-PIPO polyprotein is cleaved by P1 and HC-pro proteinases resulting in the production of three individual proteins. The P1 proteinase and the HC-pro cleave only their respective C-termini autocatalytically. 6K1 is essential for proper proteolytic separation of P3 from CI.

The protein localises to the host cytoplasmic vesicle. The protein resides in the host nucleus. Its subcellular location is the host cytoplasm. It localises to the virion. The enzyme catalyses RNA(n) + a ribonucleoside 5'-triphosphate = RNA(n+1) + diphosphate. It carries out the reaction Hydrolyzes glutaminyl bonds, and activity is further restricted by preferences for the amino acids in P6 - P1' that vary with the species of potyvirus, e.g. Glu-Xaa-Xaa-Tyr-Xaa-Gln-|-(Ser or Gly) for the enzyme from tobacco etch virus. The natural substrate is the viral polyprotein, but other proteins and oligopeptides containing the appropriate consensus sequence are also cleaved.. The catalysed reaction is Hydrolyzes a Gly-|-Gly bond at its own C-terminus, commonly in the sequence -Tyr-Xaa-Val-Gly-|-Gly, in the processing of the potyviral polyprotein.. In terms of biological role, required for aphid transmission and also has proteolytic activity. Only cleaves a Gly-Gly dipeptide at its own C-terminus. Interacts with virions and aphid stylets. Acts as a suppressor of RNA-mediated gene silencing, also known as post-transcriptional gene silencing (PTGS), a mechanism of plant viral defense that limits the accumulation of viral RNAs. May have RNA-binding activity. Functionally, has helicase activity. It may be involved in replication. Its function is as follows. Indispensable for virus replication. Reduces the abundance of host transcripts related to jasmonic acid biosynthesis therefore altering the host defenses. In order to increase its own stability, decreases host protein degradation pathways. Indispensable for virus replication. In terms of biological role, mediates the cap-independent, EIF4E-dependent translation of viral genomic RNAs. Binds to the cap-binding site of host EIF4E and thus interferes with the host EIF4E-dependent mRNA export and translation. VPg-RNA directly binds EIF4E and is a template for transcription. Also forms trimeric complexes with EIF4E-EIF4G, which are templates for translation. Functionally, has RNA-binding and proteolytic activities. Its function is as follows. An RNA-dependent RNA polymerase that plays an essential role in the virus replication. Involved in aphid transmission, cell-to-cell and systemis movement, encapsidation of the viral RNA and in the regulation of viral RNA amplification. The protein is Genome polyprotein of Plum pox potyvirus (strain D) (PPV).